We begin with the raw amino-acid sequence, 410 residues long: Argininosuccinate synthase (410 aa).

ATP is bound by residues 13-21 (AYSGGLDTS) and Ala40. L-citrulline contacts are provided by Tyr91 and Ser96. Residue Gly121 coordinates ATP. The L-aspartate site is built by Thr123, Asn127, and Asp128. Asn127 contributes to the L-citrulline binding site. Residues Arg131, Ser182, Ser191, Glu267, and Tyr279 each contribute to the L-citrulline site.

The protein belongs to the argininosuccinate synthase family. Type 1 subfamily. In terms of assembly, homotetramer.

The protein localises to the cytoplasm. It catalyses the reaction L-citrulline + L-aspartate + ATP = 2-(N(omega)-L-arginino)succinate + AMP + diphosphate + H(+). Its pathway is amino-acid biosynthesis; L-arginine biosynthesis; L-arginine from L-ornithine and carbamoyl phosphate: step 2/3. The protein is Argininosuccinate synthase of Maricaulis maris (strain MCS10) (Caulobacter maris).